A 197-amino-acid chain; its full sequence is Inner membrane protein p54 (197 aa).

A helical transmembrane segment spans residues 32-52; sequence YTILIAIVVLVIIIIVLIYLF. Positions 84–123 are disordered; that stretch reads PQPGTSKPAGATTASVGKPVTGRPATNRPVTDRPATNNPV. Repeat copies occupy residues 139-142, 143-146, 147-150, and 151-154. Residues 139–154 are 4 X 4 AA tandem repeats of A-A-A-S; that stretch reads AAASAAASAAASAAAS. The tract at residues 163–175 is interaction with host DYNLL1; the sequence is YTTVTTQNTASQT.

Belongs to the asfivirus envelope protein p54 family. As to quaternary structure, interacts with the host light chain cytoplasmic dynein DYNLL1; this interaction is critical for intracellular microtubule-dependent virus transport toward viral factories.

The protein resides in the virion membrane. It is found in the host cytoplasm. Its subcellular location is the host cytoskeleton. It localises to the host endoplasmic reticulum membrane. In terms of biological role, inner envelope protein involved, through its interaction with host dynein, in the intracellular microtubule-dependent transport of viral capsid toward viral factories. Seems to induce caspase-3 activation and apoptosis. Plays a role in virion morphogenesis by recruiting and transforming the host ER membranes into the precursors of the viral envelope. Involved in virus attachment to the host cell. This is Inner membrane protein p54 from African swine fever virus (isolate Tick/South Africa/Pretoriuskop Pr4/1996) (ASFV).